A 300-amino-acid polypeptide reads, in one-letter code: Zinc finger protein 705B (300 aa).

A KRAB domain is found at 7–78; the sequence is VTFEDVAIDF…GRVFLQDQNP (72 aa). 3 C2H2-type zinc fingers span residues 172–194, 200–222, and 228–250; these read YQCNLCEKAYTNCFYLRRHKMTH, YACHLCGKAFTQCSHLRRHEKTH, and YKCHQCGKAFIQSFNLRRHERTH. The C2H2-type 4; degenerate zinc finger occupies 256 to 278; the sequence is YECDKSGKAFSQSSGFRGNKIIH.

The protein belongs to the krueppel C2H2-type zinc-finger protein family.

Its subcellular location is the nucleus. In terms of biological role, may be involved in transcriptional regulation. The protein is Zinc finger protein 705B (ZNF705B) of Homo sapiens (Human).